The primary structure comprises 376 residues: Succinyl-diaminopimelate desuccinylase (376 aa).

Zn(2+) is bound at residue H66. The active site involves D68. Position 99 (D99) interacts with Zn(2+). The active-site Proton acceptor is E133. The Zn(2+) site is built by E134, E162, and H348.

Belongs to the peptidase M20A family. DapE subfamily. As to quaternary structure, homodimer. Zn(2+) serves as cofactor. It depends on Co(2+) as a cofactor.

It catalyses the reaction N-succinyl-(2S,6S)-2,6-diaminopimelate + H2O = (2S,6S)-2,6-diaminopimelate + succinate. It functions in the pathway amino-acid biosynthesis; L-lysine biosynthesis via DAP pathway; LL-2,6-diaminopimelate from (S)-tetrahydrodipicolinate (succinylase route): step 3/3. Functionally, catalyzes the hydrolysis of N-succinyl-L,L-diaminopimelic acid (SDAP), forming succinate and LL-2,6-diaminopimelate (DAP), an intermediate involved in the bacterial biosynthesis of lysine and meso-diaminopimelic acid, an essential component of bacterial cell walls. This is Succinyl-diaminopimelate desuccinylase from Nitrosococcus oceani (strain ATCC 19707 / BCRC 17464 / JCM 30415 / NCIMB 11848 / C-107).